The primary structure comprises 149 residues: D-aminoacyl-tRNA deacylase (149 aa).

Positions Gly137 to Pro138 match the Gly-cisPro motif, important for rejection of L-amino acids motif.

Belongs to the DTD family. As to quaternary structure, homodimer.

The protein localises to the cytoplasm. It carries out the reaction glycyl-tRNA(Ala) + H2O = tRNA(Ala) + glycine + H(+). The enzyme catalyses a D-aminoacyl-tRNA + H2O = a tRNA + a D-alpha-amino acid + H(+). Its function is as follows. An aminoacyl-tRNA editing enzyme that deacylates mischarged D-aminoacyl-tRNAs. Also deacylates mischarged glycyl-tRNA(Ala), protecting cells against glycine mischarging by AlaRS. Acts via tRNA-based rather than protein-based catalysis; rejects L-amino acids rather than detecting D-amino acids in the active site. By recycling D-aminoacyl-tRNA to D-amino acids and free tRNA molecules, this enzyme counteracts the toxicity associated with the formation of D-aminoacyl-tRNA entities in vivo and helps enforce protein L-homochirality. This Clostridium novyi (strain NT) protein is D-aminoacyl-tRNA deacylase.